The sequence spans 942 residues: Protein FAM184B (942 aa).

Disordered regions lie at residues 1–26 (MASA…RGGS) and 73–97 (QEDL…TSED). Coiled coils occupy residues 89-150 (QEQS…RVLI), 196-337 (EMHQ…DRLM), and 387-495 (SETQ…SLLE). Positions 486–542 (STKLQNSLLEDPCSRPKKPARDEGLEKLTDEEESSSDEEERTGESVKGKSDLQPPFE) are disordered. Positions 504–513 (PARDEGLEKL) are enriched in basic and acidic residues. The span at 514-526 (TDEEESSSDEEER) shows a compositional bias: acidic residues. 2 coiled-coil regions span residues 575–619 (NKDS…ESLR) and 686–815 (EKGL…ERRF). A disordered region spans residues 880–934 (APPITKSPSLDPSPSCSQPYKPTQLLDGKTASRTQDGEPAQPKEAPQKQGSPHQE). Over residues 885-900 (KSPSLDPSPSCSQPYK) the composition is skewed to polar residues.

It belongs to the FAM184 family.

The chain is Protein FAM184B (Fam184b) from Mus musculus (Mouse).